The chain runs to 48 residues: MKKNFWFWGFTDSAETWNGRFAMIGFMAVIFIELVTGKGLLYLSGLMN.

This sequence belongs to the ELIP/psbS family.

The protein localises to the plastid. It localises to the chloroplast. Functionally, possible role in chlorophyll and/or carotenoid binding. This is an uncharacterized protein from Porphyra purpurea (Red seaweed).